The sequence spans 162 residues: Endoribonuclease YbeY (162 aa).

Residues His128, His132, and His138 each contribute to the Zn(2+) site.

It belongs to the endoribonuclease YbeY family. Zn(2+) serves as cofactor.

It localises to the cytoplasm. Its function is as follows. Single strand-specific metallo-endoribonuclease involved in late-stage 70S ribosome quality control and in maturation of the 3' terminus of the 16S rRNA. The protein is Endoribonuclease YbeY of Lactococcus lactis subsp. cremoris (strain SK11).